We begin with the raw amino-acid sequence, 250 residues long: Tripartite motif-containing protein 73 (250 aa).

The RING-type zinc finger occupies 16 to 57 (CPICLEVFKESLMLQCGHSYCKGCLVSLSYHLDTKVRCPMCW). A B box-type zinc finger spans residues 84 to 125 (PEPKVCVHHRNPLSLFCEKDQELICGLCGLLGSHQHHPVTPV). Zn(2+) contacts are provided by Cys-89, His-92, Cys-111, and His-117. 2 coiled-coil regions span residues 125–169 (VSTV…NESD) and 204–235 (LVAS…FGNE).

Belongs to the TRIM/RBCC family.

The protein is Tripartite motif-containing protein 73 (TRIM73) of Homo sapiens (Human).